The following is a 342-amino-acid chain: Holliday junction branch migration complex subunit RuvB (342 aa).

The segment at 1–184 is large ATPase domain (RuvB-L); the sequence is MDNERVITAV…FGIVQRLEFY (184 aa). ATP-binding positions include I23, R24, G65, K68, T69, T70, 131 to 133, R174, Y184, and R221; that span reads EDY. T69 lines the Mg(2+) pocket. The tract at residues 185–255 is small ATPAse domain (RuvB-S); sequence SVDDLSGIVS…IAQRALDMLE (71 aa). The interval 258-342 is head domain (RuvB-H); that stretch reads SCGLDGTDRR…PRQDGDLFND (85 aa). DNA-binding residues include R313 and R318.

Belongs to the RuvB family. As to quaternary structure, homohexamer. Forms an RuvA(8)-RuvB(12)-Holliday junction (HJ) complex. HJ DNA is sandwiched between 2 RuvA tetramers; dsDNA enters through RuvA and exits via RuvB. An RuvB hexamer assembles on each DNA strand where it exits the tetramer. Each RuvB hexamer is contacted by two RuvA subunits (via domain III) on 2 adjacent RuvB subunits; this complex drives branch migration. In the full resolvosome a probable DNA-RuvA(4)-RuvB(12)-RuvC(2) complex forms which resolves the HJ.

It localises to the cytoplasm. The catalysed reaction is ATP + H2O = ADP + phosphate + H(+). Its function is as follows. The RuvA-RuvB-RuvC complex processes Holliday junction (HJ) DNA during genetic recombination and DNA repair, while the RuvA-RuvB complex plays an important role in the rescue of blocked DNA replication forks via replication fork reversal (RFR). RuvA specifically binds to HJ cruciform DNA, conferring on it an open structure. The RuvB hexamer acts as an ATP-dependent pump, pulling dsDNA into and through the RuvAB complex. RuvB forms 2 homohexamers on either side of HJ DNA bound by 1 or 2 RuvA tetramers; 4 subunits per hexamer contact DNA at a time. Coordinated motions by a converter formed by DNA-disengaged RuvB subunits stimulates ATP hydrolysis and nucleotide exchange. Immobilization of the converter enables RuvB to convert the ATP-contained energy into a lever motion, pulling 2 nucleotides of DNA out of the RuvA tetramer per ATP hydrolyzed, thus driving DNA branch migration. The RuvB motors rotate together with the DNA substrate, which together with the progressing nucleotide cycle form the mechanistic basis for DNA recombination by continuous HJ branch migration. Branch migration allows RuvC to scan DNA until it finds its consensus sequence, where it cleaves and resolves cruciform DNA. In Alcanivorax borkumensis (strain ATCC 700651 / DSM 11573 / NCIMB 13689 / SK2), this protein is Holliday junction branch migration complex subunit RuvB.